The chain runs to 320 residues: NAC domain-containing protein 20 (320 aa).

The 157-residue stretch at 14 to 170 (LPPGFRFHPT…DWAVCRIFHK (157 aa)) folds into the NAC domain. The DNA-binding element occupies 114 to 176 (IGMKKTLVFY…IFHKSSGIKK (63 aa)).

In terms of assembly, forms homodimers. Forms heterodimers with NAC26. As to expression, expressed in developing seeds. Expressed in developing endosperm.

The protein resides in the nucleus. Its subcellular location is the endoplasmic reticulum. Its function is as follows. Transcription factor that acts redundantly with NAC26 to regulate the expression of genes involved in the biosynthesis of starch and storage proteins in grain. Directly binds to the promoters of starch synthase 1 (SS1), pullulanase (PUL), glutelin A1 (GLUA1), glutelins B4 and B5 (GLUB4 and GLUB5), alpha-globulin and 16 kDa prolamin, and activates their expression. The polypeptide is NAC domain-containing protein 20 (Oryza sativa subsp. japonica (Rice)).